Here is a 620-residue protein sequence, read N- to C-terminus: Chaperone protein DnaK (620 aa).

Phosphothreonine; by autocatalysis is present on T174. The disordered stretch occupies residues 590–620 (AAGAGPDMSGAGPQGDTYAGDDVVDGDYREV).

The protein belongs to the heat shock protein 70 family.

Functionally, acts as a chaperone. This chain is Chaperone protein DnaK, found in Lachnoclostridium phytofermentans (strain ATCC 700394 / DSM 18823 / ISDg) (Clostridium phytofermentans).